Consider the following 315-residue polypeptide: PIH1 domain-containing protein 2 (315 aa).

The protein belongs to the PIH1 family.

This chain is PIH1 domain-containing protein 2 (PIH1D2), found in Homo sapiens (Human).